The chain runs to 261 residues: 5'-nucleotidase SurE (261 aa).

Residues D12, D13, S43, and N100 each contribute to the a divalent metal cation site.

It belongs to the SurE nucleotidase family. The cofactor is a divalent metal cation.

It localises to the cytoplasm. It carries out the reaction a ribonucleoside 5'-phosphate + H2O = a ribonucleoside + phosphate. Its function is as follows. Nucleotidase that shows phosphatase activity on nucleoside 5'-monophosphates. This is 5'-nucleotidase SurE from Protochlamydia amoebophila (strain UWE25).